The primary structure comprises 208 residues: Ypt/Rab-type GTPase YPT7 (208 aa).

GTP-binding positions include 17–23 (SGVGKTS), 33–40 (YSQQYKAT), G67, and 126–129 (NKID). The Effector region motif lies at 37 to 45 (YKATIGADF). K147 participates in a covalent cross-link: Glycyl lysine isopeptide (Lys-Gly) (interchain with G-Cter in ubiquitin). Residue 158-160 (SAK) participates in GTP binding. Residues C206 and C208 are each lipidated (S-geranylgeranyl cysteine). Position 208 is a cysteine methyl ester (C208).

It belongs to the small GTPase superfamily. Rab family. In terms of assembly, interacts with IVY1. Interacts with YIF1, YIP4 and YIP5. Interacts with the HOPS complex. Interacts with the class C-Vps complex. Interacts with VPS35. Interacts with VPS39. Interacts with the GDP dissociation inhibitor GDI1. Interacts with CCZ1.

The protein localises to the late endosome. It localises to the vacuole membrane. Its activity is regulated as follows. Rab activation is generally mediated by a guanine exchange factor (GEF), while inactivation through hydrolysis of bound GTP is catalyzed by a GTPase activating protein (GAP). YPT7 is activated by GEFs MON1-CCZ1 complex (MC1) and VAM6/VPS39, and inactivated by GAPs GYP7 and GYP1. Its function is as follows. Ypt/Rab-type GTPases are key regulators of membrane trafficking and intracellular vesicular transport. They act as molecular switches that convert between GTP-bound and GDP-bound states, and regulate virtually all steps of membrane traffic from the formation of the transport vesicle at the donor membrane to its fusion at the target membrane. In the GDP-bound state, Ypt proteins are predominantly cytosolic, solubilized through the interaction with a GDP dissociation inhibitor (GDI). In the GTP-bound state, the proteins are membrane bound and interact with specific effector proteins that select cargo, promote vesicle movement, or verify the correct site of fusion. Involved in regulation of vesicular protein transport in exo- and endocytosis. Involved in regulation of late endosome to vacuole trafficking and homotypic vacuole fusion, by interacting in its GTP-bound state on the donor membrane with the large multiprotein HOPS/class C-Vps tethering complex on the acceptor membrane. Involved in retromer assembly and cargo export, recognizing the cargo selection complex (CSC). GTP-bound YPT7 recruits CSC to vacuolar membranes via retromer subunit VPS35. Interacts with the HOPS complex subunit VPS39 independent of the HOPS complex at mitochondria-vacuole contact sites (vCLAMPs), providing a physical and metabolic interconnection between the endocytic pathway and mitochondria. This is Ypt/Rab-type GTPase YPT7 (YPT7) from Saccharomyces cerevisiae (strain ATCC 204508 / S288c) (Baker's yeast).